Here is a 296-residue protein sequence, read N- to C-terminus: Ribosomal RNA small subunit methyltransferase A (296 aa).

S-adenosyl-L-methionine is bound by residues Asn31, Leu33, Gly58, Glu79, Asp104, and Asn129.

It belongs to the class I-like SAM-binding methyltransferase superfamily. rRNA adenine N(6)-methyltransferase family. RsmA subfamily.

Its subcellular location is the cytoplasm. The catalysed reaction is adenosine(1518)/adenosine(1519) in 16S rRNA + 4 S-adenosyl-L-methionine = N(6)-dimethyladenosine(1518)/N(6)-dimethyladenosine(1519) in 16S rRNA + 4 S-adenosyl-L-homocysteine + 4 H(+). Functionally, specifically dimethylates two adjacent adenosines (A1518 and A1519) in the loop of a conserved hairpin near the 3'-end of 16S rRNA in the 30S particle. May play a critical role in biogenesis of 30S subunits. In Shouchella clausii (strain KSM-K16) (Alkalihalobacillus clausii), this protein is Ribosomal RNA small subunit methyltransferase A.